The chain runs to 415 residues: SVF1-like protein YDR222W (415 aa).

The protein belongs to the SVF1 family.

It is found in the cytoplasm. This is SVF1-like protein YDR222W from Saccharomyces cerevisiae (strain ATCC 204508 / S288c) (Baker's yeast).